A 209-amino-acid chain; its full sequence is ATP-dependent Clp protease proteolytic subunit 2 (209 aa).

Serine 107 functions as the Nucleophile in the catalytic mechanism. The active site involves histidine 132.

This sequence belongs to the peptidase S14 family. As to quaternary structure, fourteen ClpP subunits assemble into 2 heptameric rings which stack back to back to give a disk-like structure with a central cavity, resembling the structure of eukaryotic proteasomes.

The protein resides in the cytoplasm. It carries out the reaction Hydrolysis of proteins to small peptides in the presence of ATP and magnesium. alpha-casein is the usual test substrate. In the absence of ATP, only oligopeptides shorter than five residues are hydrolyzed (such as succinyl-Leu-Tyr-|-NHMec, and Leu-Tyr-Leu-|-Tyr-Trp, in which cleavage of the -Tyr-|-Leu- and -Tyr-|-Trp bonds also occurs).. Cleaves peptides in various proteins in a process that requires ATP hydrolysis. Has a chymotrypsin-like activity. Plays a major role in the degradation of misfolded proteins. This is ATP-dependent Clp protease proteolytic subunit 2 from Corynebacterium jeikeium (strain K411).